Consider the following 734-residue polypeptide: Photosystem I P700 chlorophyll a apoprotein A2 (734 aa).

8 helical membrane-spanning segments follow: residues isoleucine 46 to alanine 69, leucine 135 to glutamine 158, leucine 175 to isoleucine 199, isoleucine 273 to tyrosine 291, leucine 330 to tyrosine 353, alanine 369 to valine 395, alanine 417 to histidine 439, and phenylalanine 517 to valine 535. Residues cysteine 559 and cysteine 568 each contribute to the [4Fe-4S] cluster site. 2 helical membrane passes run alanine 575 to tryptophan 596 and leucine 643 to isoleucine 665. Residues histidine 654, methionine 662, and tyrosine 670 each coordinate chlorophyll a. Residue tryptophan 671 participates in phylloquinone binding. The helical transmembrane segment at leucine 707–alanine 727 threads the bilayer.

Belongs to the PsaA/PsaB family. The PsaA/B heterodimer binds the P700 chlorophyll special pair and subsequent electron acceptors. PSI consists of a core antenna complex that captures photons, and an electron transfer chain that converts photonic excitation into a charge separation. The eukaryotic PSI reaction center is composed of at least 11 subunits. It depends on P700 is a chlorophyll a/chlorophyll a' dimer, A0 is one or more chlorophyll a, A1 is one or both phylloquinones and FX is a shared 4Fe-4S iron-sulfur center. as a cofactor.

It localises to the plastid. The protein localises to the chloroplast thylakoid membrane. The catalysed reaction is reduced [plastocyanin] + hnu + oxidized [2Fe-2S]-[ferredoxin] = oxidized [plastocyanin] + reduced [2Fe-2S]-[ferredoxin]. In terms of biological role, psaA and PsaB bind P700, the primary electron donor of photosystem I (PSI), as well as the electron acceptors A0, A1 and FX. PSI is a plastocyanin-ferredoxin oxidoreductase, converting photonic excitation into a charge separation, which transfers an electron from the donor P700 chlorophyll pair to the spectroscopically characterized acceptors A0, A1, FX, FA and FB in turn. Oxidized P700 is reduced on the lumenal side of the thylakoid membrane by plastocyanin. The protein is Photosystem I P700 chlorophyll a apoprotein A2 of Chlorokybus atmophyticus (Soil alga).